A 192-amino-acid chain; its full sequence is MIYQKQRNTAETQLNISISDDQSPSHINTGVGFLNHMLTLFTFHSGLSLNIEAQGDIDVDDHHVTEDIGIVIGQLLLEMIKDKKHFVRYGTMYIPMDETLARVVVDISGRPYLSFNASLSKEKVGTFDTELVEEFFRAVVINARLTTHIDLIRGGNTHHEIEAIFKAFSRALGIALTATDDQRVPSSKGVIE.

The protein belongs to the imidazoleglycerol-phosphate dehydratase family.

It localises to the cytoplasm. The enzyme catalyses D-erythro-1-(imidazol-4-yl)glycerol 3-phosphate = 3-(imidazol-4-yl)-2-oxopropyl phosphate + H2O. It participates in amino-acid biosynthesis; L-histidine biosynthesis; L-histidine from 5-phospho-alpha-D-ribose 1-diphosphate: step 6/9. In Staphylococcus aureus (strain JH9), this protein is Imidazoleglycerol-phosphate dehydratase.